The sequence spans 355 residues: Elongation factor Ts (355 aa).

The involved in Mg(2+) ion dislocation from EF-Tu stretch occupies residues 82 to 85 (TDFV).

This sequence belongs to the EF-Ts family.

It localises to the cytoplasm. In terms of biological role, associates with the EF-Tu.GDP complex and induces the exchange of GDP to GTP. It remains bound to the aminoacyl-tRNA.EF-Tu.GTP complex up to the GTP hydrolysis stage on the ribosome. This Helicobacter pylori (strain J99 / ATCC 700824) (Campylobacter pylori J99) protein is Elongation factor Ts (tsf).